The chain runs to 258 residues: Small ribosomal subunit protein mS40 (258 aa).

The N-terminal 35 residues, 1-35, are a transit peptide targeting the mitochondrion; the sequence is MAASVLNTVLRRLPMLSLFRGSHRVQVPLQTLCTK. A phosphoserine mark is found at S38 and S49. Residues 214–258 form a disordered region; that stretch reads SRLRRLYQGHLQEESGPPPESMPKMPPRTPAEASSTGQTGPQSAL. A compositionally biased stretch (pro residues) spans 229–242; sequence GPPPESMPKMPPRT. The span at 245-258 shows a compositional bias: polar residues; the sequence is EASSTGQTGPQSAL.

The protein belongs to the bacterial ribosomal protein bS18 family. Mitochondrion-specific ribosomal protein mS40 subfamily. As to quaternary structure, component of the mitochondrial small ribosomal subunit (mt-SSU). Mature mammalian 55S mitochondrial ribosomes consist of a small (28S) and a large (39S) subunit. The 28S small subunit contains a 12S ribosomal RNA (12S mt-rRNA) and 30 different proteins. The 39S large subunit contains a 16S rRNA (16S mt-rRNA), a copy of mitochondrial valine transfer RNA (mt-tRNA(Val)), which plays an integral structural role, and 52 different proteins. mS40 has a zinc binding site.

Its subcellular location is the mitochondrion. The sequence is that of Small ribosomal subunit protein mS40 (MRPS18B) from Homo sapiens (Human).